A 230-amino-acid polypeptide reads, in one-letter code: Ribulose-phosphate 3-epimerase (230 aa).

A substrate-binding site is contributed by serine 10. A divalent metal cation contacts are provided by histidine 35, aspartate 37, and histidine 68. Aspartate 37 serves as the catalytic Proton acceptor. Substrate is bound by residues histidine 68, 146-149 (GFGG), 179-181 (DGG), and 201-202 (GS). Residue aspartate 179 coordinates a divalent metal cation. Residue aspartate 179 is the Proton donor of the active site.

This sequence belongs to the ribulose-phosphate 3-epimerase family. Homohexamer. Requires a divalent metal cation as cofactor.

It carries out the reaction D-ribulose 5-phosphate = D-xylulose 5-phosphate. It functions in the pathway carbohydrate degradation. Functionally, catalyzes the reversible epimerization of D-ribulose 5-phosphate to D-xylulose 5-phosphate. This Synechocystis sp. (strain ATCC 27184 / PCC 6803 / Kazusa) protein is Ribulose-phosphate 3-epimerase.